A 430-amino-acid chain; its full sequence is Adenylosuccinate synthetase (430 aa).

GTP is bound by residues 13-19 and 41-43; these read GDEGKGK and GHT. The active-site Proton acceptor is Asp-14. Residues Asp-14 and Gly-41 each coordinate Mg(2+). Residues 14 to 17, 39 to 42, Thr-130, Arg-144, Gln-225, Thr-240, and Arg-304 each bind IMP; these read DEGK and NAGH. His-42 (proton donor) is an active-site residue. 300–306 contacts substrate; it reads STTGRAR. GTP contacts are provided by residues Arg-306, 332-334, and 414-416; these read KLD and STG.

This sequence belongs to the adenylosuccinate synthetase family. In terms of assembly, homodimer. Mg(2+) is required as a cofactor.

It localises to the cytoplasm. It carries out the reaction IMP + L-aspartate + GTP = N(6)-(1,2-dicarboxyethyl)-AMP + GDP + phosphate + 2 H(+). Its pathway is purine metabolism; AMP biosynthesis via de novo pathway; AMP from IMP: step 1/2. Functionally, plays an important role in the de novo pathway of purine nucleotide biosynthesis. Catalyzes the first committed step in the biosynthesis of AMP from IMP. The protein is Adenylosuccinate synthetase of Pseudomonas entomophila (strain L48).